Reading from the N-terminus, the 175-residue chain is ATP-dependent protease subunit HslV (175 aa).

Threonine 2 is an active-site residue. Positions 157, 160, and 163 each coordinate Na(+).

This sequence belongs to the peptidase T1B family. HslV subfamily. A double ring-shaped homohexamer of HslV is capped on each side by a ring-shaped HslU homohexamer. The assembly of the HslU/HslV complex is dependent on binding of ATP.

Its subcellular location is the cytoplasm. The enzyme catalyses ATP-dependent cleavage of peptide bonds with broad specificity.. Its activity is regulated as follows. Allosterically activated by HslU binding. Functionally, protease subunit of a proteasome-like degradation complex believed to be a general protein degrading machinery. The polypeptide is ATP-dependent protease subunit HslV (Photobacterium profundum (strain SS9)).